Here is a 608-residue protein sequence, read N- to C-terminus: Protein FAM151A (608 aa).

A helical transmembrane segment spans residues 14 to 34 (WILAGSVTVTLVLAISLILGL). Residues 586–596 (VSSNRPSSRIG) show a composition bias toward polar residues. Residues 586–608 (VSSNRPSSRIGPSSVEGFPGESR) are disordered.

This sequence belongs to the menorin family.

It is found in the membrane. In Mus musculus (Mouse), this protein is Protein FAM151A (Fam151a).